A 351-amino-acid chain; its full sequence is D-alanine--D-alanine ligase (351 aa).

The ATP-grasp domain occupies 135–343 (NQIFLQSGQK…MEEVFSDLIE (209 aa)). Residue 167-222 (LETLGFPQFLKPVEGGSSVSVYKITNREQLKEKLALIFESDSKVMSQSFLTGIEVS) coordinates ATP. Residues aspartate 298, glutamate 310, and asparagine 312 each coordinate Mg(2+).

The protein belongs to the D-alanine--D-alanine ligase family. Mg(2+) is required as a cofactor. Mn(2+) serves as cofactor.

It is found in the cytoplasm. The enzyme catalyses 2 D-alanine + ATP = D-alanyl-D-alanine + ADP + phosphate + H(+). Its pathway is cell wall biogenesis; peptidoglycan biosynthesis. Cell wall formation. In Leptospira interrogans serogroup Icterohaemorrhagiae serovar copenhageni (strain Fiocruz L1-130), this protein is D-alanine--D-alanine ligase.